A 321-amino-acid chain; its full sequence is L-carnitine dehydrogenase (321 aa).

14 to 19 lines the NAD(+) pocket; sequence GSGVIG.

This sequence belongs to the 3-hydroxyacyl-CoA dehydrogenase family. L-carnitine dehydrogenase subfamily. In terms of assembly, homodimer.

Its subcellular location is the cytoplasm. It catalyses the reaction carnitine + NAD(+) = 3-dehydrocarnitine + NADH + H(+). The protein operates within amine and polyamine metabolism; carnitine metabolism. In terms of biological role, catalyzes the NAD(+)-dependent oxidation of L-carnitine to 3-dehydrocarnitine. This is L-carnitine dehydrogenase from Pseudomonas putida (strain ATCC 47054 / DSM 6125 / CFBP 8728 / NCIMB 11950 / KT2440).